Consider the following 96-residue polypeptide: U-reduvitoxin-Pr12a (96 aa).

The signal sequence occupies residues 1–20 (MKTALLLFFALVFIAFETEA). 3 disulfides stabilise this stretch: Cys21–Cys38, Cys33–Cys53, and Cys36–Cys47. 2 Pacifastin domains span residues 21-55 (CRPG…ICPP) and 59-94 (KLEC…CIHK). Residues 54-56 (PPR) are pro-Pro-Arg motif necessary for proteolytic processing. Disulfide bonds link Cys62-Cys77, Cys72-Cys91, and Cys75-Cys86.

Belongs to the protease inhibitor I19 family. Expressed by the venom gland.

The protein localises to the secreted. Its function is as follows. Inhibits trypsin activity and prophenoloxidase (PPO) activation, an enzyme essential for both clotting and insect innate immune responses. It does not inhibit activity of chymotrypsin and protease K, and has no effect on phenoloxidase (PO) activity. This chain is U-reduvitoxin-Pr12a, found in Platymeris rhadamanthus (Red spot assassin bug).